A 260-amino-acid chain; its full sequence is uncharacterized protein (260 aa).

The protein belongs to the methyltransferase superfamily.

The protein resides in the cytoplasm. Its subcellular location is the nucleus. Probable methyltransferase. This is an uncharacterized protein from Schizosaccharomyces pombe (strain 972 / ATCC 24843) (Fission yeast).